The following is a 456-amino-acid chain: Bifunctional protein GlmU (456 aa).

Positions 1–229 are pyrophosphorylase; sequence MLNNAMSVVI…LSEVEGVNNR (229 aa). UDP-N-acetyl-alpha-D-glucosamine-binding positions include 11–14, lysine 25, glutamine 76, 81–82, 103–105, glycine 140, glutamate 154, asparagine 169, and asparagine 227; these read LAAG, GT, and YGD. Aspartate 105 lines the Mg(2+) pocket. Asparagine 227 lines the Mg(2+) pocket. Residues 230-250 form a linker region; that stretch reads LQLSRLERVYQSEQAEKLLLA. Residues 251–456 are N-acetyltransferase; that stretch reads GVMLRDPARF…EGWRRPVKKK (206 aa). UDP-N-acetyl-alpha-D-glucosamine contacts are provided by arginine 333 and lysine 351. Histidine 363 acts as the Proton acceptor in catalysis. UDP-N-acetyl-alpha-D-glucosamine contacts are provided by tyrosine 366 and asparagine 377. Acetyl-CoA-binding positions include alanine 380, 386 to 387, serine 405, alanine 423, and arginine 440; that span reads NY.

In the N-terminal section; belongs to the N-acetylglucosamine-1-phosphate uridyltransferase family. The protein in the C-terminal section; belongs to the transferase hexapeptide repeat family. Homotrimer. Mg(2+) is required as a cofactor.

It localises to the cytoplasm. It catalyses the reaction alpha-D-glucosamine 1-phosphate + acetyl-CoA = N-acetyl-alpha-D-glucosamine 1-phosphate + CoA + H(+). The enzyme catalyses N-acetyl-alpha-D-glucosamine 1-phosphate + UTP + H(+) = UDP-N-acetyl-alpha-D-glucosamine + diphosphate. It functions in the pathway nucleotide-sugar biosynthesis; UDP-N-acetyl-alpha-D-glucosamine biosynthesis; N-acetyl-alpha-D-glucosamine 1-phosphate from alpha-D-glucosamine 6-phosphate (route II): step 2/2. The protein operates within nucleotide-sugar biosynthesis; UDP-N-acetyl-alpha-D-glucosamine biosynthesis; UDP-N-acetyl-alpha-D-glucosamine from N-acetyl-alpha-D-glucosamine 1-phosphate: step 1/1. Its pathway is bacterial outer membrane biogenesis; LPS lipid A biosynthesis. In terms of biological role, catalyzes the last two sequential reactions in the de novo biosynthetic pathway for UDP-N-acetylglucosamine (UDP-GlcNAc). The C-terminal domain catalyzes the transfer of acetyl group from acetyl coenzyme A to glucosamine-1-phosphate (GlcN-1-P) to produce N-acetylglucosamine-1-phosphate (GlcNAc-1-P), which is converted into UDP-GlcNAc by the transfer of uridine 5-monophosphate (from uridine 5-triphosphate), a reaction catalyzed by the N-terminal domain. The sequence is that of Bifunctional protein GlmU from Escherichia coli O157:H7 (strain EC4115 / EHEC).